The primary structure comprises 1059 residues: MNMSQASVSFQDVTVEFTREEWQHLGPVERTLYRDVMLENYSHLISVGYCITKPKVISKLEKGEEPWSLEDEFLNQRYPGYFKVDHIKGIREKQEKPLWQEIFISDADKTLSKEGQKVLEKPFNLEIAPELSEKISCKCDSHRMNLPVASQLIISERKYSRKKTEYMNVCEKLQLDIKHEKAHAEEKSYEHGENAKAFSYKKDQHWKFQTLEESFECDGSGQGLYDKTICITPQSFLTGEKSCKDDEFRKNFDKITLFNHMRTDTRGKCSDLNEYGTSCDKTTAVEYNKVHMAMTHYECNERGINFSRKSPLTQSQRTITGWSAFESNKCEENFSQSSAHIVHQKTQAGDKFGEHNECTDALYQKLDFTAHQRIHTEDKFYLSDEHGKCRKSFYRKAHLIQHQRPHSGEKTYQYEECAKSFCSSSHPIQHPGTYVGFKLYECNECGKAFCQNSNLSKHLRIHTKEKPCDNNGCGRSYKSPLIGHQKTDAEMELCGGSEYGKTSHLKGHQRILMGEKPYECIECGKTFSKTSHLRAHQRIHTGEKPYECVECEKTFSHKTHLSVHQRVHTGEKPYECNDCGKSFTYNSALRAHQRIHTGEKPYECSDCEKTFAHNSALRAHHRIHTGEKPYECNECGRSFAHISVLKAHQRIHTGEKPYECNECGRSFTYNSALRAHQRIHTGRKPYECSDCEKTFAHNSALKIHQRIHTGEKPYECNECEKTFAHNSALRAHQNIHTGEKLYECSECGKTFFQKTRLSTHRRIHTGEKPYECSKCGKTFSQKSYLSGHERIHTGEKPYECNVCGKTFVYKAALIVHQRIHTGEKPYECNQCGKTFSQRTHLCAHQRIHTGEKPYECNECGKTFADNSALRAHHRIHTGEKPYECNDCGKTFSKTSHLRAHLRTRSGEKPYECSECGKTFSEKSYVSAHQRVHTGEKPYECNVCGKPFAHNSTLRVHQRIHTGEKSYECNDCGKTFSQKSHLSAHQRIHTGEKPYECNECGKAFAQNSTLRVHQRIHTGEKPYECDECGKTFVRKAALRVHHTRMHTREKTLACNGFGKS.

The 72-residue stretch at 8 to 79 folds into the KRAB domain; it reads VSFQDVTVEF…EDEFLNQRYP (72 aa). K178 is covalently cross-linked (Glycyl lysine isopeptide (Lys-Gly) (interchain with G-Cter in SUMO2)). Residues 325 to 347 form a C2H2-type 1; degenerate zinc finger; the sequence is FESNKCEENFSQSSAHIVHQKTQ. Residues 352 to 375 form a C2H2-type 2; degenerate zinc finger; the sequence is FGEHNECTDALYQKLDFTAHQRIH. The C2H2-type 3; degenerate zinc-finger motif lies at 381-406; the sequence is YLSDEHGKCRKSFYRKAHLIQHQRPH. A C2H2-type 4; degenerate zinc finger spans residues 412 to 434; sequence YQYEECAKSFCSSSHPIQHPGTY. 14 C2H2-type zinc fingers span residues 440–462, 518–540, 546–568, 574–596, 602–624, 630–652, 658–680, 686–708, 714–736, 742–764, 770–792, 798–820, 826–848, and 854–876; these read YECNECGKAFCQNSNLSKHLRIH, YECIECGKTFSKTSHLRAHQRIH, YECVECEKTFSHKTHLSVHQRVH, YECNDCGKSFTYNSALRAHQRIH, YECSDCEKTFAHNSALRAHHRIH, YECNECGRSFAHISVLKAHQRIH, YECNECGRSFTYNSALRAHQRIH, YECSDCEKTFAHNSALKIHQRIH, YECNECEKTFAHNSALRAHQNIH, YECSECGKTFFQKTRLSTHRRIH, YECSKCGKTFSQKSYLSGHERIH, YECNVCGKTFVYKAALIVHQRIH, YECNQCGKTFSQRTHLCAHQRIH, and YECNECGKTFADNSALRAHHRIH. A C2H2-type 19; degenerate zinc finger spans residues 882–904; sequence YECNDCGKTFSKTSHLRAHLRTR. C2H2-type zinc fingers lie at residues 910 to 932, 938 to 960, 966 to 988, 994 to 1016, and 1022 to 1045; these read YECSECGKTFSEKSYVSAHQRVH, YECNVCGKPFAHNSTLRVHQRIH, YECNDCGKTFSQKSHLSAHQRIH, YECNECGKAFAQNSTLRVHQRIH, and YECDECGKTFVRKAALRVHHTRMH.

Belongs to the krueppel C2H2-type zinc-finger protein family.

The protein resides in the nucleus. Functionally, mediates transcriptional repression in response to zinc. Represses several genes, including SLC30A5, SLC30A10 and CBWD1, by binding to the zinc transcriptional regulatory element (ZTRE) (5'-C[AC]C[TAG]CC[TC]-N(0-50)-[GA]G[ATC]G[TG]G-3') found in the promoter region. May play a role in the control of ribosome biogenesis, regulating predominantly rRNA levels, as well as those of several ribosomal proteins, thus coordinating this highly zinc-demanding process with the available zinc supply. The polypeptide is Zinc finger protein 658 (ZNF658) (Homo sapiens (Human)).